Reading from the N-terminus, the 269-residue chain is uncharacterized protein (269 aa).

A run of 6 helical transmembrane segments spans residues 21–43, 48–70, 121–143, 147–166, 205–227, and 242–264; these read LNVW…ILFT, LFLI…FSLI, YLIL…VFTF, FIIA…FWII, SLEV…LFQF, and FVAF…YLLW.

It localises to the cell membrane. This is an uncharacterized protein from Aquifex aeolicus (strain VF5).